We begin with the raw amino-acid sequence, 328 residues long: Peroxisomal adenine nucleotide transporter 1 (328 aa).

Transmembrane regions (helical) follow at residues 1-21, 78-98, 128-148, 185-202, 226-246, and 277-297; these read MLTL…NIAV, TVTT…YTFI, LVLG…MAVV, LRTG…YASF, FILG…LIVA, and WKGV…LFAF. 3 Solcar repeats span residues 1–101, 122–208, and 220–304; these read MLTL…IRKS, PSTI…LKEV, and LSAV…LTKS.

Belongs to the mitochondrial carrier (TC 2.A.29) family.

The protein resides in the peroxisome membrane. Adenine nucleotide transporter involved in the uniport of ATP and adenine nucleotide hetero-exchange transport between the cytosol and the peroxisomal lumen. This transport is accompanied by a proton transport from the peroxisomal lumen to the cytosol. Transport of ATP into the peroxisome is required for beta-oxidation of medium-chain fatty acids. Required for growth on medium-chain fatty acids, pH gradient formation in peroxisomes and for normal peroxisome proliferation. This Saccharomyces cerevisiae (strain ATCC 204508 / S288c) (Baker's yeast) protein is Peroxisomal adenine nucleotide transporter 1 (ANT1).